Here is a 186-residue protein sequence, read N- to C-terminus: Guanylate kinase (186 aa).

Positions 5 to 183 (GNLTVLTGPS…AFKEIEGFMG (179 aa)) constitute a Guanylate kinase-like domain. ATP is bound at residue 12 to 19 (GPSGVGKG).

Belongs to the guanylate kinase family.

It is found in the cytoplasm. The enzyme catalyses GMP + ATP = GDP + ADP. Functionally, essential for recycling GMP and indirectly, cGMP. This Prochlorococcus marinus (strain NATL2A) protein is Guanylate kinase.